The following is a 170-amino-acid chain: Adenine phosphoribosyltransferase (170 aa).

The protein belongs to the purine/pyrimidine phosphoribosyltransferase family. Homodimer.

Its subcellular location is the cytoplasm. It carries out the reaction AMP + diphosphate = 5-phospho-alpha-D-ribose 1-diphosphate + adenine. Its pathway is purine metabolism; AMP biosynthesis via salvage pathway; AMP from adenine: step 1/1. In terms of biological role, catalyzes a salvage reaction resulting in the formation of AMP, that is energically less costly than de novo synthesis. This chain is Adenine phosphoribosyltransferase, found in Geobacillus thermodenitrificans (strain NG80-2).